Reading from the N-terminus, the 100-residue chain is uncharacterized protein (100 aa).

It is found in the virion. This is an uncharacterized protein from Acanthamoeba polyphaga mimivirus (APMV).